Reading from the N-terminus, the 425-residue chain is MFENLCALQLDSDLFAQAIHPEEPIVAVGLASGHVQTYRLPPGASDDSDPDEALAAEKGFGHIATTWKTRRHKGSCRTLAFSVDGSSLYSAGTDGIVKVADTTTGRVTAKFAVPLDLANGGIDAPTLVHALSPQSLILGTDSSALHIYDIRDQGAKSAFKPQATHRPHDDYVSSLTPLPPTEASTSGFSKQWVTTGGSTLAVTDLRRGVMVRSEDQEEELLSSVMVTGLSKKGTSVGEKVLVGGGNGVLTLWERGVWDDQDERITIDRSKGGGESLDVIALLPDGVGPGGKIAAVGLGDGSLRFVKLGPNKIIDELKHDELRQEGVIGLGFDVTGRMVSGGGKKLNIWGEKTWQDVPEDDEDEQEEEAPANGKREHESDEDEDSDEDMEESSEDDEPKQKRKKRRKGKGGKQAKGHGILHFSGLA.

WD repeat units follow at residues 9-48 (QLDSDLFAQAIHPEEPIVAVGLASGHVQTYRLPPGASDDS), 71-110 (RHKGSCRTLAFSVDGSSLYSAGTDGIVKVADTTTGRVTAK), 117-158 (LANG…AKSA), 219-262 (ELLS…DQDE), and 321-358 (LRQEGVIGLGFDVTGRMVSGGGKKLNIWGEKTWQDVPE). The interval 354–425 (QDVPEDDEDE…HGILHFSGLA (72 aa)) is disordered. 2 stretches are compositionally biased toward acidic residues: residues 356–368 (VPEDDEDEQEEEA) and 378–396 (SDEDEDSDEDMEESSEDDE). Positions 399–414 (QKRKKRRKGKGGKQAK) are enriched in basic residues.

It belongs to the WD repeat WDR55 family.

The protein resides in the nucleus. Its subcellular location is the nucleolus. The protein is WD repeat-containing protein JIP5 (JIP5) of Phaeosphaeria nodorum (strain SN15 / ATCC MYA-4574 / FGSC 10173) (Glume blotch fungus).